Reading from the N-terminus, the 138-residue chain is Putative nickel-responsive regulator (138 aa).

4 residues coordinate Ni(2+): H80, H91, H93, and C99.

This sequence belongs to the transcriptional regulatory CopG/NikR family. Ni(2+) is required as a cofactor.

Transcriptional regulator. In Campylobacter hominis (strain ATCC BAA-381 / DSM 21671 / CCUG 45161 / LMG 19568 / NCTC 13146 / CH001A), this protein is Putative nickel-responsive regulator.